The chain runs to 113 residues: Heavy metal-associated isoprenylated plant protein 15 (113 aa).

The HMA domain maps to 1 to 65 (MIVWMGVYDQ…KWGKAKLTLY (65 aa)). Residues 69–89 (DALKEAKIAEAKQKREEIERE) adopt a coiled-coil conformation. The residue at position 110 (Cys110) is a Cysteine methyl ester. Cys110 carries the S-farnesyl cysteine lipid modification. The propeptide at 111 to 113 (VIC) is removed in mature form.

It belongs to the HIPP family. Expressed in embryo sacs.

Functionally, probable heavy-metal-binding protein. The sequence is that of Heavy metal-associated isoprenylated plant protein 15 from Arabidopsis thaliana (Mouse-ear cress).